A 101-amino-acid polypeptide reads, in one-letter code: Small ribosomal subunit protein bS6 (101 aa).

This sequence belongs to the bacterial ribosomal protein bS6 family.

Its function is as follows. Binds together with bS18 to 16S ribosomal RNA. The protein is Small ribosomal subunit protein bS6 of Pseudarthrobacter chlorophenolicus (strain ATCC 700700 / DSM 12829 / CIP 107037 / JCM 12360 / KCTC 9906 / NCIMB 13794 / A6) (Arthrobacter chlorophenolicus).